Here is a 136-residue protein sequence, read N- to C-terminus: Galectin-7 (136 aa).

Positions 6-136 (HKSSLPEGIR…DVQLDSVRIF (131 aa)) constitute a Galectin domain. 70 to 76 (WGREERG) lines the a beta-D-galactoside pocket.

As to quaternary structure, monomer. Mainly expressed in stratified squamous epithelium.

It is found in the cytoplasm. The protein localises to the nucleus. Its subcellular location is the secreted. Could be involved in cell-cell and/or cell-matrix interactions necessary for normal growth control. Pro-apoptotic protein that functions intracellularly upstream of JNK activation and cytochrome c release. This is Galectin-7 (LGALS7) from Homo sapiens (Human).